A 173-amino-acid chain; its full sequence is Beta-defensin 129 (173 aa).

Residues 1-19 (MKLLFPIFASLMLQYKVNT) form the signal peptide. 3 cysteine pairs are disulfide-bonded: Cys-27-Cys-53, Cys-34-Cys-48, and Cys-38-Cys-54. The disordered stretch occupies residues 144–173 (STKSNIKESRDSATASPPPAPPPPNTLPTP). A compositionally biased stretch (pro residues) spans 159-173 (SPPPAPPPPNTLPTP).

This sequence belongs to the beta-defensin family.

The protein localises to the secreted. In terms of biological role, has antibacterial activity. In Hylobates lar (Lar gibbon), this protein is Beta-defensin 129 (DEFB129).